The following is an 82-amino-acid chain: Photosystem I iron-sulfur center (82 aa).

4Fe-4S ferredoxin-type domains lie at Ala-2–Trp-31 and Ile-40–Tyr-69. Cys-11, Cys-14, Cys-17, Cys-21, Cys-49, Cys-52, Cys-55, and Cys-59 together coordinate [4Fe-4S] cluster.

The cyanobacterial PSI reaction center is composed of one copy each of PsaA,B,C,D,E,F,I,J,K,L,M and X, and forms trimeric complexes. The cofactor is [4Fe-4S] cluster.

The protein localises to the cellular thylakoid membrane. It catalyses the reaction reduced [plastocyanin] + hnu + oxidized [2Fe-2S]-[ferredoxin] = oxidized [plastocyanin] + reduced [2Fe-2S]-[ferredoxin]. Functionally, apoprotein for the two 4Fe-4S centers FA and FB of photosystem I (PSI); essential for photochemical activity. FB is the terminal electron acceptor of PSI, donating electrons to ferredoxin. The C-terminus interacts with PsaA/B/D and helps assemble the protein into the PSI complex. Required for binding of PsaD and PsaE to PSI. PSI is a plastocyanin/cytochrome c6-ferredoxin oxidoreductase, converting photonic excitation into a charge separation, which transfers an electron from the donor P700 chlorophyll pair to the spectroscopically characterized acceptors A0, A1, FX, FA and FB in turn. This is Photosystem I iron-sulfur center from Synechococcus sp. (strain JA-3-3Ab) (Cyanobacteria bacterium Yellowstone A-Prime).